We begin with the raw amino-acid sequence, 562 residues long: IRK-interacting protein (562 aa).

2 disordered regions span residues 29-61 and 303-322; these read ASLM…RPLP and VVSQ…SEMP. The span at 36-61 shows a compositional bias: low complexity; it reads SSPSSNYSLRNPSSSSAASPASRPLP. Residues 246-306 adopt a coiled-coil conformation; the sequence is SGVEKLKREL…LREATEVVSQ (61 aa).

As to quaternary structure, interacts with IRK. As to expression, highly expressed in root tips, shoot apices and developing flowers.

The sequence is that of IRK-interacting protein from Arabidopsis thaliana (Mouse-ear cress).